A 493-amino-acid polypeptide reads, in one-letter code: tRNA-2-methylthio-N(6)-dimethylallyladenosine synthase (493 aa).

Polar residues predominate over residues 1–14 (MPMTGLLQTTLSTA). Positions 1 to 31 (MPMTGLLQTTLSTADQDRSGPAATTGDTPAR) are disordered. In terms of domain architecture, MTTase N-terminal spans 35 to 155 (KRLHVITWGC…LGGMVRRAMN (121 aa)). The [4Fe-4S] cluster site is built by cysteine 44, cysteine 80, cysteine 118, cysteine 199, cysteine 203, and cysteine 206. The 233-residue stretch at 185-417 (LAGGRTAFLT…QALLRTQQEA (233 aa)) folds into the Radical SAM core domain. The region spanning 420-482 (TACIGKTVNV…TNSLSATLPD (63 aa)) is the TRAM domain.

This sequence belongs to the methylthiotransferase family. MiaB subfamily. As to quaternary structure, monomer. Requires [4Fe-4S] cluster as cofactor.

The protein resides in the cytoplasm. The enzyme catalyses N(6)-dimethylallyladenosine(37) in tRNA + (sulfur carrier)-SH + AH2 + 2 S-adenosyl-L-methionine = 2-methylsulfanyl-N(6)-dimethylallyladenosine(37) in tRNA + (sulfur carrier)-H + 5'-deoxyadenosine + L-methionine + A + S-adenosyl-L-homocysteine + 2 H(+). Its function is as follows. Catalyzes the methylthiolation of N6-(dimethylallyl)adenosine (i(6)A), leading to the formation of 2-methylthio-N6-(dimethylallyl)adenosine (ms(2)i(6)A) at position 37 in tRNAs that read codons beginning with uridine. The sequence is that of tRNA-2-methylthio-N(6)-dimethylallyladenosine synthase from Granulibacter bethesdensis (strain ATCC BAA-1260 / CGDNIH1).